Consider the following 41-residue polypeptide: uncharacterized protein (41 aa).

The chain crosses the membrane as a helical span at residues 8–28; the sequence is IKKIAMFFLGILVGVFIVLFF.

The protein resides in the membrane. This is an uncharacterized protein from Streptococcus pneumoniae serotype 2 (strain D39 / NCTC 7466).